A 111-amino-acid polypeptide reads, in one-letter code: T cell receptor beta variable 29-1 (111 aa).

A signal peptide spans 1–16 (MLSLLLLLLGLGSVFS). Positions 17–111 (AVISQKPSRD…DSSIYLCSVE (95 aa)) constitute an Ig-like domain. Cysteines 38 and 108 form a disulfide. A glycan (N-linked (GlcNAc...) asparagine) is linked at Asn-87.

In terms of assembly, alpha-beta TR is a heterodimer composed of an alpha and beta chain; disulfide-linked. The alpha-beta TR is associated with the transmembrane signaling CD3 coreceptor proteins to form the TR-CD3 (TcR or TCR). The assembly of alpha-beta TR heterodimers with CD3 occurs in the endoplasmic reticulum where a single alpha-beta TR heterodimer associates with one CD3D-CD3E heterodimer, one CD3G-CD3E heterodimer and one CD247 homodimer forming a stable octameric structure. CD3D-CD3E and CD3G-CD3E heterodimers preferentially associate with TR alpha and TR beta chains, respectively. The association of the CD247 homodimer is the last step of TcR assembly in the endoplasmic reticulum and is required for transport to the cell surface.

It localises to the cell membrane. V region of the variable domain of T cell receptor (TR) beta chain that participates in the antigen recognition. Alpha-beta T cell receptors are antigen specific receptors which are essential to the immune response and are present on the cell surface of T lymphocytes. Recognize peptide-major histocompatibility (MH) (pMH) complexes that are displayed by antigen presenting cells (APC), a prerequisite for efficient T cell adaptive immunity against pathogens. Binding of alpha-beta TR to pMH complex initiates TR-CD3 clustering on the cell surface and intracellular activation of LCK that phosphorylates the ITAM motifs of CD3G, CD3D, CD3E and CD247 enabling the recruitment of ZAP70. In turn ZAP70 phosphorylates LAT, which recruits numerous signaling molecules to form the LAT signalosome. The LAT signalosome propagates signal branching to three major signaling pathways, the calcium, the mitogen-activated protein kinase (MAPK) kinase and the nuclear factor NF-kappa-B (NF-kB) pathways, leading to the mobilization of transcription factors that are critical for gene expression and essential for T cell growth and differentiation. The T cell repertoire is generated in the thymus, by V-(D)-J rearrangement. This repertoire is then shaped by intrathymic selection events to generate a peripheral T cell pool of self-MH restricted, non-autoaggressive T cells. Post-thymic interaction of alpha-beta TR with the pMH complexes shapes TR structural and functional avidity. The sequence is that of T cell receptor beta variable 29-1 from Homo sapiens (Human).